We begin with the raw amino-acid sequence, 107 residues long: MMKVLVVVALLVTLISYSSSEGIDDLEADELLSLTANEQTRKECIPKHHECTSNKHGCCRGNFFKYKCQCTTVVTQDGEQTERCFCGTPPHHKAAELVVGFGKKILG.

The N-terminal stretch at 1–20 (MMKVLVVVALLVTLISYSSS) is a signal peptide. The propeptide occupies 21-41 (EGIDDLEADELLSLTANEQTR). Disulfide bonds link cysteine 44/cysteine 59, cysteine 51/cysteine 68, cysteine 58/cysteine 86, and cysteine 70/cysteine 84.

This sequence belongs to the neurotoxin 19 (CSTX) family. 04 (U1-Lctx) subfamily. As to expression, expressed by the venom gland.

It localises to the secreted. In Lycosa singoriensis (Wolf spider), this protein is U1-lycotoxin-Ls1v.